A 309-amino-acid polypeptide reads, in one-letter code: Formamidopyrimidine-DNA glycosylase (309 aa).

P2 functions as the Schiff-base intermediate with DNA in the catalytic mechanism. E3 acts as the Proton donor in catalysis. K56 functions as the Proton donor; for beta-elimination activity in the catalytic mechanism. Positions 106 and 129 each coordinate DNA. The FPG-type zinc finger occupies 271-305 (NVYGRQGNACPHCESTLENIKLNGRASVYCPLCQP). R295 functions as the Proton donor; for delta-elimination activity in the catalytic mechanism.

The protein belongs to the FPG family. In terms of assembly, monomer. Zn(2+) serves as cofactor.

It catalyses the reaction Hydrolysis of DNA containing ring-opened 7-methylguanine residues, releasing 2,6-diamino-4-hydroxy-5-(N-methyl)formamidopyrimidine.. The catalysed reaction is 2'-deoxyribonucleotide-(2'-deoxyribose 5'-phosphate)-2'-deoxyribonucleotide-DNA = a 3'-end 2'-deoxyribonucleotide-(2,3-dehydro-2,3-deoxyribose 5'-phosphate)-DNA + a 5'-end 5'-phospho-2'-deoxyribonucleoside-DNA + H(+). Involved in base excision repair of DNA damaged by oxidation or by mutagenic agents. Acts as a DNA glycosylase that recognizes and removes damaged bases. Has a preference for oxidized purines, such as 7,8-dihydro-8-oxoguanine (8-oxoG). Has AP (apurinic/apyrimidinic) lyase activity and introduces nicks in the DNA strand. Cleaves the DNA backbone by beta-delta elimination to generate a single-strand break at the site of the removed base with both 3'- and 5'-phosphates. In Psychrobacter arcticus (strain DSM 17307 / VKM B-2377 / 273-4), this protein is Formamidopyrimidine-DNA glycosylase.